The following is a 431-amino-acid chain: Adenylosuccinate synthetase (431 aa).

GTP-binding positions include 13 to 19 (GDEGKGK) and 41 to 43 (GHT). D14 (proton acceptor) is an active-site residue. Positions 14 and 41 each coordinate Mg(2+). IMP-binding positions include 14–17 (DEGK), 39–42 (NAGH), T130, R144, Q225, T240, and R304. H42 serves as the catalytic Proton donor. 300 to 306 (TTTGRSR) serves as a coordination point for substrate. GTP contacts are provided by residues R306, 332–334 (KLD), and 414–416 (STG).

This sequence belongs to the adenylosuccinate synthetase family. In terms of assembly, homodimer. It depends on Mg(2+) as a cofactor.

The protein resides in the cytoplasm. The catalysed reaction is IMP + L-aspartate + GTP = N(6)-(1,2-dicarboxyethyl)-AMP + GDP + phosphate + 2 H(+). It participates in purine metabolism; AMP biosynthesis via de novo pathway; AMP from IMP: step 1/2. Plays an important role in the de novo pathway of purine nucleotide biosynthesis. Catalyzes the first committed step in the biosynthesis of AMP from IMP. The polypeptide is Adenylosuccinate synthetase (Marinobacter nauticus (strain ATCC 700491 / DSM 11845 / VT8) (Marinobacter aquaeolei)).